The following is a 301-amino-acid chain: Putative F-box/LRR-repeat protein 19 (301 aa).

Residues 18–66 form the F-box domain; that stretch reads PDWSELTRECLLDIFSRLSQEQRWIGPMLVSKNWMNACYDPTLNTIFDL. LRR repeat units lie at residues 108–133, 134–159, 160–185, 231–256, and 257–282; these read IRHC…WIKN, CPNV…DISY, SYGI…KRNL, YSTL…DLRG, and CISL…IKPD.

This is Putative F-box/LRR-repeat protein 19 (FBL19) from Arabidopsis thaliana (Mouse-ear cress).